The chain runs to 186 residues: Peptidyl-tRNA hydrolase (186 aa).

Tyr14 contacts tRNA. His19 serves as the catalytic Proton acceptor. The tRNA site is built by Tyr61, Asn63, and Asn107.

It belongs to the PTH family. As to quaternary structure, monomer.

It localises to the cytoplasm. The catalysed reaction is an N-acyl-L-alpha-aminoacyl-tRNA + H2O = an N-acyl-L-amino acid + a tRNA + H(+). Hydrolyzes ribosome-free peptidyl-tRNAs (with 1 or more amino acids incorporated), which drop off the ribosome during protein synthesis, or as a result of ribosome stalling. Functionally, catalyzes the release of premature peptidyl moieties from peptidyl-tRNA molecules trapped in stalled 50S ribosomal subunits, and thus maintains levels of free tRNAs and 50S ribosomes. The polypeptide is Peptidyl-tRNA hydrolase (Helicobacter pylori (strain J99 / ATCC 700824) (Campylobacter pylori J99)).